Reading from the N-terminus, the 59-residue chain is Large ribosomal subunit protein bL32 (59 aa).

A compositionally biased stretch (basic residues) spans 1–16; it reads MAVPKRKTSPSKRGMR. The segment at 1 to 59 is disordered; it reads MAVPKRKTSPSKRGMRRSADALKAPTYVEDKNSGELRRPHHIDLKSGMYRGRQVLEAKE. Over residues 28 to 44 the composition is skewed to basic and acidic residues; sequence VEDKNSGELRRPHHIDL.

This sequence belongs to the bacterial ribosomal protein bL32 family.

The sequence is that of Large ribosomal subunit protein bL32 from Brucella anthropi (strain ATCC 49188 / DSM 6882 / CCUG 24695 / JCM 21032 / LMG 3331 / NBRC 15819 / NCTC 12168 / Alc 37) (Ochrobactrum anthropi).